A 70-amino-acid polypeptide reads, in one-letter code: MLNPSIDSLLQKIDSKYTLVTVAAKRAREMQLANNCVVEQPVSHKCVGKALEEIDAEVLSYVPSEDKVAE.

It belongs to the RNA polymerase subunit omega family. In terms of assembly, the RNAP catalytic core consists of 2 alpha, 1 beta, 1 beta' and 1 omega subunit. When a sigma factor is associated with the core the holoenzyme is formed, which can initiate transcription.

It catalyses the reaction RNA(n) + a ribonucleoside 5'-triphosphate = RNA(n+1) + diphosphate. Functionally, promotes RNA polymerase assembly. Latches the N- and C-terminal regions of the beta' subunit thereby facilitating its interaction with the beta and alpha subunits. This is DNA-directed RNA polymerase subunit omega from Bacillus cereus (strain G9842).